The primary structure comprises 443 residues: MSTSDSIVSSQTKQSSWRKSDTTWTLGLFGTAIGAGVLFFPIRAGFGGLIPILLMLVLAYPIAFYCHRALARLCLSGSNPSGNITETVEEHFGKTGGVVITFLYFFAICPLLWIYGVTITNTFMTFWENQLGFAPLNRGFVALFLLLLMAFVIWFGKDLMVKVMSYLVWPFIASLVLISLSLIPYWNSAVIDQVDLGSLSLTGHDGILITVWLGISIMVFSFNFSPIVSSFVVSKREEYEKDFGRDFTERKCSQIISRASMLMVAVVMFFAFSCLFTLSPANMAEAKAQNIPVLSYLANHFASMTGTKTTFAITLEYAASIIALVAIFKSFFGHYLGTLEGLNGLILKFGYKGDKTKVSLGKLNTLSMIFIMGSTWVVAYANPNILDLIEAMGAPIIASLLCLLPMYAIRKAPSLAKYRGRLDNVFVTVIGLLTILNIVYKLF.

11 consecutive transmembrane segments (helical) span residues 22 to 42 (TTWTLGLFGTAIGAGVLFFPI), 44 to 64 (AGFGGLIPILLMLVLAYPIAF), 97 to 117 (GVVITFLYFFAICPLLWIYGV), 140 to 160 (FVALFLLLLMAFVIWFGKDLM), 163 to 183 (VMSYLVWPFIASLVLISLSLI), 207 to 227 (ILITVWLGISIMVFSFNFSPI), 261 to 281 (MLMVAVVMFFAFSCLFTLSPA), 311 to 331 (FAITLEYAASIIALVAIFKSF), 366 to 386 (LSMIFIMGSTWVVAYANPNIL), 389 to 409 (IEAMGAPIIASLLCLLPMYAI), and 423 to 443 (DNVFVTVIGLLTILNIVYKLF).

Belongs to the amino acid/polyamine transporter 2 family. SdaC/TdcC subfamily.

It localises to the cell inner membrane. The enzyme catalyses L-threonine(in) + H(+)(in) = L-threonine(out) + H(+)(out). The catalysed reaction is L-serine(in) + H(+)(in) = L-serine(out) + H(+)(out). Functionally, involved in the import of threonine and serine into the cell, with the concomitant import of a proton (symport system). The sequence is that of Threonine/serine transporter TdcC from Shigella flexneri serotype 5b (strain 8401).